Reading from the N-terminus, the 488-residue chain is Bifunctional protein HldE (488 aa).

The ribokinase stretch occupies residues 1 to 330; the sequence is MDRKSIESIF…NAVALAHSDS (330 aa). ATP is bound at residue 205 to 208; that stretch reads NRRE. Residue Asp-275 is part of the active site. The interval 356–488 is cytidylyltransferase; sequence FTNGCFDLLH…IIERVLERYS (133 aa).

In the N-terminal section; belongs to the carbohydrate kinase PfkB family. The protein in the C-terminal section; belongs to the cytidylyltransferase family. As to quaternary structure, homodimer.

The enzyme catalyses D-glycero-beta-D-manno-heptose 7-phosphate + ATP = D-glycero-beta-D-manno-heptose 1,7-bisphosphate + ADP + H(+). The catalysed reaction is D-glycero-beta-D-manno-heptose 1-phosphate + ATP + H(+) = ADP-D-glycero-beta-D-manno-heptose + diphosphate. It participates in nucleotide-sugar biosynthesis; ADP-L-glycero-beta-D-manno-heptose biosynthesis; ADP-L-glycero-beta-D-manno-heptose from D-glycero-beta-D-manno-heptose 7-phosphate: step 1/4. The protein operates within nucleotide-sugar biosynthesis; ADP-L-glycero-beta-D-manno-heptose biosynthesis; ADP-L-glycero-beta-D-manno-heptose from D-glycero-beta-D-manno-heptose 7-phosphate: step 3/4. Functionally, catalyzes the phosphorylation of D-glycero-D-manno-heptose 7-phosphate at the C-1 position to selectively form D-glycero-beta-D-manno-heptose-1,7-bisphosphate. In terms of biological role, catalyzes the ADP transfer from ATP to D-glycero-beta-D-manno-heptose 1-phosphate, yielding ADP-D-glycero-beta-D-manno-heptose. This is Bifunctional protein HldE from Pelobacter propionicus (strain DSM 2379 / NBRC 103807 / OttBd1).